Reading from the N-terminus, the 500-residue chain is MAKAKKQPRPKAITPKGFRDYFGEEVTQRTHMLATIAEVYHHYGFEALESSAVETVEALGKFLPDVDRPNEGVFAWQEAEDDGKGDWMALRYDLTAPLARVYAQHRNDLPSPYRRYAMGPVWRNEKPGPGRFRQFYQCDADTVGTASMAADAEICMMLSDTLEKVGIPRGDYLVRVNNRKVLNGVLEAMGLLEDDPKRDDVLRTIDKFDKVGESGVRELLGKGRLDASGAYIDGVGLEDHQAEPVLAFLTSKGDTVTETMTNLRAAVGDSKVGQEGIAELELMGSLFAAAGYGEDRILIDPSIVRGLGYYTGPVFEAELTFEIFDEKGRKRQFGSVAGGGRYDGLVKRFTGQEVPAVGLSIGVDRLLAALREKGRLAATPTGPVVVTVMDRDRMADYQAMVAELRQAGIRAEVYLGNPKNFGNQLKYADKRHSPIAVIEGGDEKDRGVVQIKDLILGAKIAESATLEEWKERPSQFEVPRTELVAKVREILVSQSSDREG.

This sequence belongs to the class-II aminoacyl-tRNA synthetase family. Homodimer.

It is found in the cytoplasm. The catalysed reaction is tRNA(His) + L-histidine + ATP = L-histidyl-tRNA(His) + AMP + diphosphate + H(+). The polypeptide is Histidine--tRNA ligase (Ruegeria sp. (strain TM1040) (Silicibacter sp.)).